Reading from the N-terminus, the 383-residue chain is Acetylornithine deacetylase (383 aa).

His-80 lines the Zn(2+) pocket. Asp-82 is an active-site residue. Asp-112 provides a ligand contact to Zn(2+). The active site involves Glu-144. Zn(2+) contacts are provided by Glu-145, Glu-169, and His-355.

It belongs to the peptidase M20A family. ArgE subfamily. In terms of assembly, homodimer. The cofactor is Zn(2+). Co(2+) is required as a cofactor. It depends on glutathione as a cofactor.

Its subcellular location is the cytoplasm. The catalysed reaction is N(2)-acetyl-L-ornithine + H2O = L-ornithine + acetate. It functions in the pathway amino-acid biosynthesis; L-arginine biosynthesis; L-ornithine from N(2)-acetyl-L-ornithine (linear): step 1/1. Functionally, catalyzes the hydrolysis of the amide bond of N(2)-acetylated L-amino acids. Cleaves the acetyl group from N-acetyl-L-ornithine to form L-ornithine, an intermediate in L-arginine biosynthesis pathway, and a branchpoint in the synthesis of polyamines. The protein is Acetylornithine deacetylase of Salmonella typhimurium (strain LT2 / SGSC1412 / ATCC 700720).